Here is a 232-residue protein sequence, read N- to C-terminus: 2,3,4,5-tetrahydropyridine-2,6-dicarboxylate N-acetyltransferase (232 aa).

The protein belongs to the transferase hexapeptide repeat family. DapH subfamily.

The catalysed reaction is (S)-2,3,4,5-tetrahydrodipicolinate + acetyl-CoA + H2O = L-2-acetamido-6-oxoheptanedioate + CoA. The protein operates within amino-acid biosynthesis; L-lysine biosynthesis via DAP pathway; LL-2,6-diaminopimelate from (S)-tetrahydrodipicolinate (acetylase route): step 1/3. In terms of biological role, catalyzes the transfer of an acetyl group from acetyl-CoA to tetrahydrodipicolinate. The protein is 2,3,4,5-tetrahydropyridine-2,6-dicarboxylate N-acetyltransferase of Streptococcus sanguinis (strain SK36).